Consider the following 503-residue polypeptide: Maturase K (503 aa).

The protein belongs to the intron maturase 2 family. MatK subfamily.

The protein localises to the plastid. It localises to the chloroplast. Functionally, usually encoded in the trnK tRNA gene intron. Probably assists in splicing its own and other chloroplast group II introns. The polypeptide is Maturase K (Thryptomene saxicola (Rock thryptomene)).